Here is a 336-residue protein sequence, read N- to C-terminus: GTPase Obg (336 aa).

The Obg domain maps to 1–159 (MKFVDSATVF…LELAMELKLM (159 aa)). Residues 120–143 (GGHGGRGNQHFATSTNQAPRRSEP) form a disordered region. The span at 129 to 138 (HFATSTNQAP) shows a compositional bias: polar residues. The OBG-type G domain maps to 160–323 (ADVGLVGFPN…LKDELWRQVS (164 aa)). GTP is bound by residues 166–173 (GFPNAGKS), 191–195 (FTTLV), 213–216 (DIPG), 280–283 (TKMD), and 304–306 (SSV). 2 residues coordinate Mg(2+): Ser-173 and Thr-193.

It belongs to the TRAFAC class OBG-HflX-like GTPase superfamily. OBG GTPase family. Monomer. The cofactor is Mg(2+).

Its subcellular location is the cytoplasm. Its function is as follows. An essential GTPase which binds GTP, GDP and possibly (p)ppGpp with moderate affinity, with high nucleotide exchange rates and a fairly low GTP hydrolysis rate. Plays a role in control of the cell cycle, stress response, ribosome biogenesis and in those bacteria that undergo differentiation, in morphogenesis control. The protein is GTPase Obg of Chlorobium phaeovibrioides (strain DSM 265 / 1930) (Prosthecochloris vibrioformis (strain DSM 265)).